The sequence spans 780 residues: B3 domain-containing transcription repressor VAL2 (780 aa).

A DNA-binding region (TF-B3) is located at residues 286 to 387; it reads FEKVLSASDA…KLVMGYRKAT (102 aa). Residues 515-565 form a CW-type zinc finger; sequence TGEQEQWVQCDACGKWRQLPVDILLPPKWSCSDNLLDPGRSSCSAPDELSP. Zn(2+) is bound by residues Cys-524, Cys-527, Cys-545, and Cys-557. Disordered regions lie at residues 577-608, 669-695, and 743-780; these read EFKRRRLASSNEKLNQSQDASALNSLGNAGIT, KRNKGEAGQASQQAQSQSECRDETEVE, and NTAGEQQSSDMVSTEHGSSSAAQETEKDTTNGAHDPVN. Polar residues predominate over residues 584 to 603; that stretch reads ASSNEKLNQSQDASALNSLG. Residues 674–686 are compositionally biased toward low complexity; it reads EAGQASQQAQSQS. The segment covering 743–765 has biased composition (polar residues); sequence NTAGEQQSSDMVSTEHGSSSAAQ.

The protein resides in the nucleus. Functionally, transcriptional repressor of gene expression involved in embryonic pathways, such as LEC1, ABI3, and FUS3. Repressor of the sugar-inducible genes involved in the seed maturation program in seedlings. Plays an essential role in regulating the transition from seed maturation to seedling growth. Functionally redundant with VAL1/HSI2. The protein is B3 domain-containing transcription repressor VAL2 (VAL2) of Arabidopsis thaliana (Mouse-ear cress).